The primary structure comprises 153 residues: HTH-type transcriptional regulator Zrp (153 aa).

Positions Ile2–Pro63 constitute an HTH asnC-type domain. The segment at residues Leu21–Ala40 is a DNA-binding region (H-T-H motif).

The protein is HTH-type transcriptional regulator Zrp (zrp) of Zymomonas mobilis subsp. mobilis (strain ATCC 10988 / DSM 424 / LMG 404 / NCIMB 8938 / NRRL B-806 / ZM1).